Reading from the N-terminus, the 396-residue chain is Elongation factor Tu (396 aa).

In terms of domain architecture, tr-type G spans 10–206; it reads KPHVNIGTIG…ACDTYIPAPV (197 aa). The tract at residues 19 to 26 is G1; sequence GHVDHGKT. 19–26 is a binding site for GTP; it reads GHVDHGKT. Thr-26 is a binding site for Mg(2+). A G2 region spans residues 60-64; it reads GITIS. Positions 81-84 are G3; it reads DCPG. GTP contacts are provided by residues 81-85 and 136-139; these read DCPGH and NKVD. A G4 region spans residues 136 to 139; the sequence is NKVD. The tract at residues 174-176 is G5; it reads SAL.

The protein belongs to the TRAFAC class translation factor GTPase superfamily. Classic translation factor GTPase family. EF-Tu/EF-1A subfamily. As to quaternary structure, monomer.

Its subcellular location is the cytoplasm. The catalysed reaction is GTP + H2O = GDP + phosphate + H(+). GTP hydrolase that promotes the GTP-dependent binding of aminoacyl-tRNA to the A-site of ribosomes during protein biosynthesis. The polypeptide is Elongation factor Tu (Bdellovibrio bacteriovorus (strain ATCC 15356 / DSM 50701 / NCIMB 9529 / HD100)).